The following is a 398-amino-acid chain: Phosphoglycerate kinase (398 aa).

Residues 23–25, R38, 61–64, R122, and R155 contribute to the substrate site; these read DFN and HLGK. ATP-binding positions include K206, G297, E328, and 354–357; that span reads GGDS.

Belongs to the phosphoglycerate kinase family. Monomer.

The protein localises to the cytoplasm. It catalyses the reaction (2R)-3-phosphoglycerate + ATP = (2R)-3-phospho-glyceroyl phosphate + ADP. It participates in carbohydrate degradation; glycolysis; pyruvate from D-glyceraldehyde 3-phosphate: step 2/5. The sequence is that of Phosphoglycerate kinase from Clostridium kluyveri (strain NBRC 12016).